The chain runs to 394 residues: D-aspartate oxidase (394 aa).

FAD contacts are provided by Ile-19, Ala-57, Ser-58, and Gly-62. The helical transmembrane segment at 190-210 threads the bilayer; that stretch reads LIGHEPTAGVIVCVGLGALVL. N-linked (GlcNAc...) asparagine glycosylation occurs at Asn-214. 3 residues coordinate FAD: Arg-342, Gly-373, and Gln-375.

This sequence belongs to the DAMOX/DASOX family. The cofactor is FAD.

The protein resides in the membrane. It carries out the reaction D-aspartate + O2 + H2O = oxaloacetate + H2O2 + NH4(+). In terms of biological role, selectively catalyzes the oxidative deamination of acidic amino acids. Protects the organism from the toxicity of D-amino acids. Enables the organism to utilize D-amino acids as a source of nutrients. Enables the organism to utilize D-aspartate and D-asparagine as a source of nitrogen. May play a role in its interaction with the host. The chain is D-aspartate oxidase from Cryptococcus neoformans var. grubii serotype A (strain H99 / ATCC 208821 / CBS 10515 / FGSC 9487) (Filobasidiella neoformans var. grubii).